Here is a 286-residue protein sequence, read N- to C-terminus: Pyridoxal kinase PdxY (286 aa).

Substrate is bound by residues Ser-9 and 44–45; that span reads MQ. Asp-111, Glu-147, and Lys-180 together coordinate ATP. Asp-221 is a substrate binding site.

Belongs to the pyridoxine kinase family. PdxY subfamily. As to quaternary structure, homodimer. Mg(2+) is required as a cofactor.

The catalysed reaction is pyridoxal + ATP = pyridoxal 5'-phosphate + ADP + H(+). It participates in cofactor metabolism; pyridoxal 5'-phosphate salvage; pyridoxal 5'-phosphate from pyridoxal: step 1/1. Its function is as follows. Pyridoxal kinase involved in the salvage pathway of pyridoxal 5'-phosphate (PLP). Catalyzes the phosphorylation of pyridoxal to PLP. In Burkholderia lata (strain ATCC 17760 / DSM 23089 / LMG 22485 / NCIMB 9086 / R18194 / 383), this protein is Pyridoxal kinase PdxY.